A 279-amino-acid polypeptide reads, in one-letter code: Tryptophan synthase alpha chain (279 aa).

Residues E50 and D61 each act as proton acceptor in the active site.

This sequence belongs to the TrpA family. In terms of assembly, tetramer of two alpha and two beta chains.

It catalyses the reaction (1S,2R)-1-C-(indol-3-yl)glycerol 3-phosphate + L-serine = D-glyceraldehyde 3-phosphate + L-tryptophan + H2O. It participates in amino-acid biosynthesis; L-tryptophan biosynthesis; L-tryptophan from chorismate: step 5/5. The alpha subunit is responsible for the aldol cleavage of indoleglycerol phosphate to indole and glyceraldehyde 3-phosphate. In Mesorhizobium japonicum (strain LMG 29417 / CECT 9101 / MAFF 303099) (Mesorhizobium loti (strain MAFF 303099)), this protein is Tryptophan synthase alpha chain.